Here is a 269-residue protein sequence, read N- to C-terminus: tRNA pseudouridine synthase A (269 aa).

D51 functions as the Nucleophile in the catalytic mechanism. Substrate is bound at residue Y109.

The protein belongs to the tRNA pseudouridine synthase TruA family. Homodimer.

The enzyme catalyses uridine(38/39/40) in tRNA = pseudouridine(38/39/40) in tRNA. Formation of pseudouridine at positions 38, 39 and 40 in the anticodon stem and loop of transfer RNAs. The chain is tRNA pseudouridine synthase A from Haemophilus influenzae (strain ATCC 51907 / DSM 11121 / KW20 / Rd).